The primary structure comprises 297 residues: 6-dehydroglucose reductase (297 aa).

W20, R21, and D49 together coordinate NADP(+). The Proton donor role is filled by Y54. D-glucose contacts are provided by Y54, K98, H129, and R130. Residues S159, N160, Q181, S211, L213, G215, G261, T262, N263, and R267 each coordinate NADP(+).

It belongs to the aldo/keto reductase family. Homotrimer.

The enzyme catalyses D-glucose + NADP(+) = 6-dehydro-D-glucose + NADPH + H(+). Its function is as follows. Part of the sulfoquinovose monooxygenase (sulfo-SMO) pathway, a D-sulfoquinovose degradation pathway that enables the complete utilization of all carbons within sulfoquinovose (SQ) with concomitant production of inorganic sulfite. Catalyzes the NADP-dependent reduction of 6-dehydro-D-glucose to D-glucose. Cannot use NADH. The polypeptide is 6-dehydroglucose reductase (Agrobacterium fabrum (strain C58 / ATCC 33970) (Agrobacterium tumefaciens (strain C58))).